A 633-amino-acid polypeptide reads, in one-letter code: Probable methyltransferase PMT15 (633 aa).

Residues 1–24 are Cytoplasmic-facing; that stretch reads MGNYRWPSKLSKLSLRAKQTNLYR. Residues 25 to 45 form a helical; Signal-anchor for type II membrane protein membrane-spanning segment; it reads VILIAILCVTFYFVGVWQHSG. The Lumenal portion of the chain corresponds to 46–633; sequence RGISRSSISN…APAPDQSSDP (588 aa). Asparagine 113 and asparagine 298 each carry an N-linked (GlcNAc...) asparagine glycan.

The protein belongs to the methyltransferase superfamily.

It localises to the golgi apparatus membrane. This Arabidopsis thaliana (Mouse-ear cress) protein is Probable methyltransferase PMT15.